Here is a 143-residue protein sequence, read N- to C-terminus: Putative pre-16S rRNA nuclease (143 aa).

This sequence belongs to the YqgF nuclease family.

Its subcellular location is the cytoplasm. Its function is as follows. Could be a nuclease involved in processing of the 5'-end of pre-16S rRNA. The chain is Putative pre-16S rRNA nuclease from Marinobacter nauticus (strain ATCC 700491 / DSM 11845 / VT8) (Marinobacter aquaeolei).